The following is a 156-amino-acid chain: Mediator of RNA polymerase II transcription subunit 28 (156 aa).

Residues 1 to 38 (MDYQQKPPQSSDPSPSPPDRPPGIRSPETPSNNQNNDI) form a disordered region. A coiled-coil region spans residues 104–156 (PSRAESLKKDIAVMEEELKTKDELIKKHMRLFQESQKLVKEQIEKHRDELEKV).

This sequence belongs to the Mediator complex subunit 28 family. Dimers. Component of the Mediator complex. Interacts with GEBPL.

It localises to the nucleus. Its function is as follows. Component of the Mediator complex, a coactivator involved in the regulated transcription of nearly all RNA polymerase II-dependent genes. Mediator functions as a bridge to convey information from gene-specific regulatory proteins to the basal RNA polymerase II transcription machinery. The Mediator complex, having a compact conformation in its free form, is recruited to promoters by direct interactions with regulatory proteins and serves for the assembly of a functional pre-initiation complex with RNA polymerase II and the general transcription factors. The polypeptide is Mediator of RNA polymerase II transcription subunit 28 (Arabidopsis thaliana (Mouse-ear cress)).